An 89-amino-acid polypeptide reads, in one-letter code: Three-finger toxin 3 (89 aa).

An N-terminal signal peptide occupies residues 1–16 (MKTLLLILGVVAFVYL). Disulfide bonds link cysteine 24-cysteine 47, cysteine 40-cysteine 66, cysteine 70-cysteine 81, and cysteine 82-cysteine 87.

The protein belongs to the three-finger toxin family. Ancestral subfamily. In terms of tissue distribution, expressed by the venom gland.

The protein resides in the secreted. The polypeptide is Three-finger toxin 3 (Sistrurus catenatus edwardsii (Desert massasauga)).